Reading from the N-terminus, the 347-residue chain is Protein phosphatase 2C homolog 1 (347 aa).

Residues 1-41 are disordered; the sequence is MKGSHPNAGSLLEPLHKLNPFSENSTSGHRKNASDHSADGE. A compositionally biased stretch (basic and acidic residues) spans 32-41; sequence NASDHSADGE. The PPM-type phosphatase domain maps to 71–323; it reads LAGLMEDKNQ…DNITCIVVNL (253 aa). The Mn(2+) site is built by Asp109, Gly110, Asp275, and Asp314.

The protein belongs to the PP2C family. Monomer. Mg(2+) serves as cofactor. The cofactor is Mn(2+).

The enzyme catalyses O-phospho-L-seryl-[protein] + H2O = L-seryl-[protein] + phosphate. It carries out the reaction O-phospho-L-threonyl-[protein] + H2O = L-threonyl-[protein] + phosphate. Its function is as follows. Serine and threonine phosphatase. Has a specialized role in the heat shock response. May be responsible for the dephosphorylation of hsp90. This Schizosaccharomyces pombe (strain 972 / ATCC 24843) (Fission yeast) protein is Protein phosphatase 2C homolog 1 (ptc1).